The following is a 234-amino-acid chain: UPF0173 metal-dependent hydrolase Meso_1362 (234 aa).

Belongs to the UPF0173 family.

The protein is UPF0173 metal-dependent hydrolase Meso_1362 of Chelativorans sp. (strain BNC1).